Consider the following 721-residue polypeptide: Long-chain-fatty-acid--CoA ligase ACSBG1 (721 aa).

Positions 1–64 (MPRSSEAGYC…SHGLELSAPE (64 aa)) are disordered. Positions 26–43 (QQGASMGTSPDNSQTSSL) are enriched in polar residues. 4 positions are modified to phosphoserine: S34, S50, S53, and S70. ATP-binding positions include 279 to 287 (TSGTTGNPK), 469 to 474 (AGYGLS), D547, and R562. At Y655 the chain carries Phosphotyrosine. K698 contacts ATP.

This sequence belongs to the ATP-dependent AMP-binding enzyme family. Bubblegum subfamily. As to expression, present in testis, at a lower level in brain, and at a very low level in ovary. Not detected in other tissues. tested. Present in Leydig cells of the adult testis and to a lesser degree in the seminiferous tubules in spermatogonia and Sertoli cells (at protein level).

The protein resides in the cytoplasm. It is found in the cytoplasmic vesicle. It localises to the microsome. The protein localises to the endoplasmic reticulum. Its subcellular location is the cell membrane. It catalyses the reaction a long-chain fatty acid + ATP + CoA = a long-chain fatty acyl-CoA + AMP + diphosphate. The catalysed reaction is (E)-hexadec-2-enoate + ATP + CoA = (2E)-hexadecenoyl-CoA + AMP + diphosphate. The enzyme catalyses hexadecanoate + ATP + CoA = hexadecanoyl-CoA + AMP + diphosphate. Its function is as follows. Catalyzes the conversion of fatty acids such as long-chain and very long-chain fatty acids to their active form acyl-CoAs for both synthesis of cellular lipids, and degradation via beta-oxidation. Can activate diverse saturated, monosaturated and polyunsaturated fatty acids. This is Long-chain-fatty-acid--CoA ligase ACSBG1 from Rattus norvegicus (Rat).